We begin with the raw amino-acid sequence, 496 residues long: Ammonium transporter 1 member 2 (496 aa).

The next 11 membrane-spanning stretches (helical) occupy residues 39–59, 74–94, 120–140, 148–168, 192–212, 236–256, 274–296, 307–327, 331–351, 360–380, and 412–432; these read LLFSAYLVFAMQLGFAMLCAG, VLDAAAGALFYYLFGFAFAFG, FFLFQWAFAIAAAGITSGSIA, YLIYSAFLTGFVYPVVSHWIW, FAGSGVVHMVGGVAGLWGALI, LVVLGSFLLWFGWYGFNPGSF, SAVGRTAVTTTLAGSTAALTTLF, VIDVCNGLLGGFAAITAGCSV, WAAIICGFVSAWVLIGLNALA, LEAAQLHGGCGAWGVIFTALF, and IVVILVIAAWVSFTMAPLFLV.

The protein belongs to the ammonia transporter channel (TC 1.A.11.2) family. Expressed in exodermis, sclerenchyma, endodermis and pericycle cells of primary root tips.

The protein resides in the membrane. Functionally, ammonium transporter probably involved in ammonium uptake from the soil and ammonium uptake and retrieval in the vascular system. The chain is Ammonium transporter 1 member 2 (AMT1-2) from Oryza sativa subsp. japonica (Rice).